Consider the following 137-residue polypeptide: S-protein homolog 16 (137 aa).

The N-terminal stretch at 1–21 (MKNLLVFIFVFSLCMFDHVSG) is a signal peptide. Asparagine 87 is a glycosylation site (N-linked (GlcNAc...) asparagine).

Belongs to the plant self-incompatibility (S1) protein family.

Its subcellular location is the secreted. The sequence is that of S-protein homolog 16 from Arabidopsis thaliana (Mouse-ear cress).